The sequence spans 493 residues: Vacuolar-processing enzyme (493 aa).

An N-terminal signal peptide occupies residues 1 to 19; the sequence is MGSSQLSTLLFFTIVVTFL. N-linked (GlcNAc...) asparagine glycosylation is present at N147. The active site involves H174. Catalysis depends on C216, which acts as the Nucleophile. The cysteines at positions 249 and 263 are disulfide-linked. Residues N295 and N331 are each glycosylated (N-linked (GlcNAc...) asparagine). Disulfide bonds link C429-C459 and C441-C476.

The protein belongs to the peptidase C13 family.

In terms of biological role, asparagine-specific endopeptidase involved in the processing of vacuolar seed protein precursors into the mature forms. The protein is Vacuolar-processing enzyme of Vicia sativa (Spring vetch).